The primary structure comprises 861 residues: Leucine--tRNA ligase (861 aa).

Residues 42–52 carry the 'HIGH' region motif; that stretch reads PYPSGKLHMGH. The short motif at 620–624 is the 'KMSKS' region element; that stretch reads KMSKS. Lys-623 lines the ATP pocket.

It belongs to the class-I aminoacyl-tRNA synthetase family.

The protein localises to the cytoplasm. It catalyses the reaction tRNA(Leu) + L-leucine + ATP = L-leucyl-tRNA(Leu) + AMP + diphosphate. This Buchnera aphidicola subsp. Schizaphis graminum (strain Sg) protein is Leucine--tRNA ligase.